We begin with the raw amino-acid sequence, 152 residues long: Inner membrane protein YbbJ (152 aa).

Residues 1-21 traverse the membrane as a helical segment; the sequence is MMELMVVHPHIFWLSLGGLLL. Over 22 to 31 the chain is Cytoplasmic; sequence AAEMLGGNGY. The chain crosses the membrane as a helical span at residues 32-52; it reads LLWSGVAAVITGLVVWLVPLG. Over 53–54 the chain is Periplasmic; that stretch reads WE. Residues 55 to 75 form a helical membrane-spanning segment; sequence WQGVMFAILTLLAAWLWWKWL. The Cytoplasmic segment spans residues 76–152; it reads SRRVREQKHS…ITLHIRAVSS (77 aa).

It to M.jannaschii MJ0826.

It localises to the cell inner membrane. This Escherichia coli (strain K12) protein is Inner membrane protein YbbJ (ybbJ).